The following is a 72-amino-acid chain: Translation initiation factor IF-1 (72 aa).

An S1-like domain is found at 1-72 (MAKEDSIEMQ…SKGRIVFRAR (72 aa)).

It belongs to the IF-1 family. In terms of assembly, component of the 30S ribosomal translation pre-initiation complex which assembles on the 30S ribosome in the order IF-2 and IF-3, IF-1 and N-formylmethionyl-tRNA(fMet); mRNA recruitment can occur at any time during PIC assembly.

It localises to the cytoplasm. One of the essential components for the initiation of protein synthesis. Stabilizes the binding of IF-2 and IF-3 on the 30S subunit to which N-formylmethionyl-tRNA(fMet) subsequently binds. Helps modulate mRNA selection, yielding the 30S pre-initiation complex (PIC). Upon addition of the 50S ribosomal subunit IF-1, IF-2 and IF-3 are released leaving the mature 70S translation initiation complex. This is Translation initiation factor IF-1 from Psychromonas ingrahamii (strain DSM 17664 / CCUG 51855 / 37).